An 87-amino-acid polypeptide reads, in one-letter code: Small ribosomal subunit protein bS20 (87 aa).

Residues 1–25 are disordered; that stretch reads MANIKSAKKRAVQSEKHRLHNASRR.

It belongs to the bacterial ribosomal protein bS20 family.

Its function is as follows. Binds directly to 16S ribosomal RNA. The chain is Small ribosomal subunit protein bS20 from Baumannia cicadellinicola subsp. Homalodisca coagulata.